A 184-amino-acid chain; its full sequence is GMP synthase [glutamine-hydrolyzing] subunit A (184 aa).

A Glutamine amidotransferase type-1 domain is found at Arg-3 to Asp-184. Cys-73 serves as the catalytic Nucleophile. Catalysis depends on residues His-161 and Glu-163.

As to quaternary structure, heterodimer composed of a glutamine amidotransferase subunit (A) and a GMP-binding subunit (B).

The catalysed reaction is XMP + L-glutamine + ATP + H2O = GMP + L-glutamate + AMP + diphosphate + 2 H(+). Its pathway is purine metabolism; GMP biosynthesis; GMP from XMP (L-Gln route): step 1/1. In terms of biological role, catalyzes the synthesis of GMP from XMP. In Natronomonas pharaonis (strain ATCC 35678 / DSM 2160 / CIP 103997 / JCM 8858 / NBRC 14720 / NCIMB 2260 / Gabara) (Halobacterium pharaonis), this protein is GMP synthase [glutamine-hydrolyzing] subunit A.